The sequence spans 417 residues: Inhibitor of growth protein 3 (417 aa).

Disordered stretches follow at residues 126 to 165 (LDTPSQPVNNHHVHSHSLGEKRKHNPSSHHSTTDHVSEKK), 177 to 198 (SDASKENTAGCRNNLSSSSTNN), and 284 to 320 (QTLTSSATTDSRSGRKSKSNNKSASQQSSSSSSSSSL). The segment covering 136-152 (HHVHSHSLGEKRKHNPS) has biased composition (basic residues). Residues 156-165 (STTDHVSEKK) show a composition bias toward basic and acidic residues. Residues 177 to 187 (SDASKENTAGC) show a composition bias toward polar residues. Low complexity-rich tracts occupy residues 189 to 198 (NNLSSSSTNN), 284 to 294 (QTLTSSATTDS), and 303 to 320 (NNKSASQQSSSSSSSSSL). The PHD-type zinc finger occupies 359 to 408 (PRYCICNQVSYGEMVGCDNQDCPIEWFHYGCVGLSEAPKGKWYCPQCTAA). 8 residues coordinate Zn(2+): Cys-362, Cys-364, Cys-375, Cys-380, His-386, Cys-389, Cys-402, and Cys-405.

This sequence belongs to the ING family. Interacts with H3K4me3 and to a lesser extent with H3K4me2. Component of the NuA4 histone acetyltransferase complex.

Its subcellular location is the nucleus. Component of the NuA4 histone acetyltransferase (HAT) complex which is involved in transcriptional activation of select genes principally by acetylation of nucleosomal histone H4 and H2A. This modification may both alter nucleosome - DNA interactions and promote interaction of the modified histones with other proteins which positively regulate transcription. NuA4 may also play a direct role in DNA repair when directly recruited to sites of DNA damage. This Xenopus tropicalis (Western clawed frog) protein is Inhibitor of growth protein 3 (ing3).